A 366-amino-acid polypeptide reads, in one-letter code: 3-dehydroquinate synthase (366 aa).

Residues 73–78, 107–111, 131–132, Lys-144, and Lys-153 contribute to the NAD(+) site; these read DGERAK, GVVGD, and TT. The Zn(2+) site is built by Glu-186, His-249, and His-266.

It belongs to the sugar phosphate cyclases superfamily. Dehydroquinate synthase family. It depends on Co(2+) as a cofactor. Zn(2+) is required as a cofactor. Requires NAD(+) as cofactor.

The protein localises to the cytoplasm. It carries out the reaction 7-phospho-2-dehydro-3-deoxy-D-arabino-heptonate = 3-dehydroquinate + phosphate. It functions in the pathway metabolic intermediate biosynthesis; chorismate biosynthesis; chorismate from D-erythrose 4-phosphate and phosphoenolpyruvate: step 2/7. In terms of biological role, catalyzes the conversion of 3-deoxy-D-arabino-heptulosonate 7-phosphate (DAHP) to dehydroquinate (DHQ). This chain is 3-dehydroquinate synthase, found in Koribacter versatilis (strain Ellin345).